A 268-amino-acid polypeptide reads, in one-letter code: Aliphatic sulfonates import ATP-binding protein SsuB 3 (268 aa).

Positions 1 to 27 (MTAAEAPLPPLAPRERTATTAAERRTG) are disordered. Basic and acidic residues predominate over residues 13–26 (PRERTATTAAERRT). An ABC transporter domain is found at 32 to 247 (VSLSGVRKSF…DRNDPEALRY (216 aa)). Residue 64-71 (GPSGTGKT) coordinates ATP.

The protein belongs to the ABC transporter superfamily. Aliphatic sulfonates importer (TC 3.A.1.17.2) family. In terms of assembly, the complex is composed of two ATP-binding proteins (SsuB), two transmembrane proteins (SsuC) and a solute-binding protein (SsuA).

The protein resides in the cell membrane. The catalysed reaction is ATP + H2O + aliphatic sulfonate-[sulfonate-binding protein]Side 1 = ADP + phosphate + aliphatic sulfonateSide 2 + [sulfonate-binding protein]Side 1.. Its function is as follows. Part of the ABC transporter complex SsuABC involved in aliphatic sulfonates import. Responsible for energy coupling to the transport system. This Rhodococcus jostii (strain RHA1) protein is Aliphatic sulfonates import ATP-binding protein SsuB 3.